Consider the following 326-residue polypeptide: UDP-3-O-acylglucosamine N-acyltransferase (326 aa).

The Proton acceptor role is filled by His-235.

This sequence belongs to the transferase hexapeptide repeat family. LpxD subfamily. In terms of assembly, homotrimer.

The catalysed reaction is a UDP-3-O-[(3R)-3-hydroxyacyl]-alpha-D-glucosamine + a (3R)-hydroxyacyl-[ACP] = a UDP-2-N,3-O-bis[(3R)-3-hydroxyacyl]-alpha-D-glucosamine + holo-[ACP] + H(+). It participates in bacterial outer membrane biogenesis; LPS lipid A biosynthesis. Functionally, catalyzes the N-acylation of UDP-3-O-acylglucosamine using 3-hydroxyacyl-ACP as the acyl donor. Is involved in the biosynthesis of lipid A, a phosphorylated glycolipid that anchors the lipopolysaccharide to the outer membrane of the cell. The sequence is that of UDP-3-O-acylglucosamine N-acyltransferase from Helicobacter hepaticus (strain ATCC 51449 / 3B1).